Consider the following 266-residue polypeptide: Vesicle-associated protein 4-1 (266 aa).

Residues 28–57 (STTSSSSTQNPNQNYRSRHGNRNTDISAVS) form a disordered region. Residues 76 to 199 (RLRLDPSSYL…VEQVLRVIFI (124 aa)) enclose the MSP domain. The stretch at 200–228 (DADRPSAALEKLKRQLDEAEAAVEARKKP) forms a coiled coil. A compositionally biased stretch (basic and acidic residues) spans 219–229 (EAAVEARKKPP). Positions 219–239 (EAAVEARKKPPPETGPRVVGE) are disordered. Serine 264 carries the phosphoserine modification.

This sequence belongs to the VAMP-associated protein (VAP) (TC 9.B.17) family.

In terms of biological role, may play a role in vesicle trafficking. This is Vesicle-associated protein 4-1 (PVA41) from Arabidopsis thaliana (Mouse-ear cress).